The chain runs to 510 residues: NAD(P)H-quinone oxidoreductase subunit 2, chloroplastic (510 aa).

The next 12 membrane-spanning stretches (helical) occupy residues 24 to 44 (LLLF…GLIL), 59 to 79 (WFYF…LFRW), 99 to 119 (IFQF…VEYI), 124 to 144 (MAIT…MFLC), 149 to 169 (LITI…LSGY), 183 to 203 (YLLM…WLYG), 229 to 249 (ISIA…PAPF), 295 to 315 (WHLL…LIAI), 323 to 343 (MLAY…IVGD), 347 to 367 (GYAS…GTFA), 395 to 415 (ALSS…AGFF), and 418 to 438 (LHLF…IGLL).

Belongs to the complex I subunit 2 family. NDH is composed of at least 16 different subunits, 5 of which are encoded in the nucleus.

It localises to the plastid. Its subcellular location is the chloroplast thylakoid membrane. The enzyme catalyses a plastoquinone + NADH + (n+1) H(+)(in) = a plastoquinol + NAD(+) + n H(+)(out). It carries out the reaction a plastoquinone + NADPH + (n+1) H(+)(in) = a plastoquinol + NADP(+) + n H(+)(out). NDH shuttles electrons from NAD(P)H:plastoquinone, via FMN and iron-sulfur (Fe-S) centers, to quinones in the photosynthetic chain and possibly in a chloroplast respiratory chain. The immediate electron acceptor for the enzyme in this species is believed to be plastoquinone. Couples the redox reaction to proton translocation, and thus conserves the redox energy in a proton gradient. The chain is NAD(P)H-quinone oxidoreductase subunit 2, chloroplastic from Yucca glauca (Soapweed yucca).